Reading from the N-terminus, the 254-residue chain is 3-deoxy-manno-octulosonate cytidylyltransferase (254 aa).

The protein belongs to the KdsB family.

The protein resides in the cytoplasm. It carries out the reaction 3-deoxy-alpha-D-manno-oct-2-ulosonate + CTP = CMP-3-deoxy-beta-D-manno-octulosonate + diphosphate. Its pathway is nucleotide-sugar biosynthesis; CMP-3-deoxy-D-manno-octulosonate biosynthesis; CMP-3-deoxy-D-manno-octulosonate from 3-deoxy-D-manno-octulosonate and CTP: step 1/1. It functions in the pathway bacterial outer membrane biogenesis; lipopolysaccharide biosynthesis. In terms of biological role, activates KDO (a required 8-carbon sugar) for incorporation into bacterial lipopolysaccharide in Gram-negative bacteria. This is 3-deoxy-manno-octulosonate cytidylyltransferase from Geobacter metallireducens (strain ATCC 53774 / DSM 7210 / GS-15).